Reading from the N-terminus, the 271-residue chain is Virulence regulon transcriptional activator VirF (271 aa).

In terms of domain architecture, HTH araC/xylS-type spans 167–265; sequence ERLQKFMEEN…GCTPSQARLT (99 aa). 2 DNA-binding regions (H-T-H motif) span residues 184-205 and 232-255; these read SKFA…GTVY and IVDI…RRRF.

Functionally, transcriptional activator of the Yersinia virulence regulon. The polypeptide is Virulence regulon transcriptional activator VirF (virF) (Yersinia enterocolitica serotype O:8 / biotype 1B (strain NCTC 13174 / 8081)).